Reading from the N-terminus, the 81-residue chain is Delta-actitoxin-Aeq2d (81 aa).

A signal peptide spans 1-19 (MNRLMILVFAAVILALASA). The propeptide occupies 20–25 (DDVDIA). 3 disulfides stabilise this stretch: C31-C78, C33-C68, and C61-C79.

The protein belongs to the sea anemone sodium channel inhibitory toxin family. Type I subfamily.

The protein resides in the secreted. It is found in the nematocyst. Functionally, binds specifically to voltage-gated sodium channels (Nav), thereby delaying their inactivation during signal transduction. Causes death to crabs. The sequence is that of Delta-actitoxin-Aeq2d from Actinia equina (Beadlet anemone).